A 93-amino-acid chain; its full sequence is Large ribosomal subunit protein uL23cz/uL23cy (93 aa).

This sequence belongs to the universal ribosomal protein uL23 family. As to quaternary structure, part of the 50S ribosomal subunit.

Its subcellular location is the plastid. The protein localises to the chloroplast. In terms of biological role, binds to 23S rRNA. In Platanus occidentalis (Sycamore), this protein is Large ribosomal subunit protein uL23cz/uL23cy (rpl23-A).